We begin with the raw amino-acid sequence, 195 residues long: ATP-dependent Clp protease proteolytic subunit (195 aa).

The active-site Nucleophile is the S98. H123 is a catalytic residue.

It belongs to the peptidase S14 family. As to quaternary structure, fourteen ClpP subunits assemble into 2 heptameric rings which stack back to back to give a disk-like structure with a central cavity, resembling the structure of eukaryotic proteasomes.

It localises to the cytoplasm. It catalyses the reaction Hydrolysis of proteins to small peptides in the presence of ATP and magnesium. alpha-casein is the usual test substrate. In the absence of ATP, only oligopeptides shorter than five residues are hydrolyzed (such as succinyl-Leu-Tyr-|-NHMec, and Leu-Tyr-Leu-|-Tyr-Trp, in which cleavage of the -Tyr-|-Leu- and -Tyr-|-Trp bonds also occurs).. Its function is as follows. Cleaves peptides in various proteins in a process that requires ATP hydrolysis. Has a chymotrypsin-like activity. Plays a major role in the degradation of misfolded proteins. This is ATP-dependent Clp protease proteolytic subunit from Staphylococcus haemolyticus (strain JCSC1435).